We begin with the raw amino-acid sequence, 101 residues long: Protein Tat (101 aa).

A compositionally biased stretch (basic and acidic residues) spans 1–12 (MEPVDPRLEPWK). The disordered stretch occupies residues 1–20 (MEPVDPRLEPWKHPGSQPKT). The interval 1 to 24 (MEPVDPRLEPWKHPGSQPKTACTT) is interaction with human CREBBP. The transactivation stretch occupies residues 1-48 (MEPVDPRLEPWKHPGSQPKTACTTCYCKKCCFHCQVCFTKKALGISYG). Residues cysteine 22, cysteine 25, and cysteine 27 each coordinate Zn(2+). Positions 22 to 37 (CTTCYCKKCCFHCQVC) are cysteine-rich. An N6-acetyllysine; by host PCAF modification is found at lysine 28. Zn(2+) is bound by residues cysteine 30, histidine 33, cysteine 34, and cysteine 37. The interval 38-48 (FTKKALGISYG) is core. The interval 47-101 (YGRKKRRQRRRAPEDSQTHQVSLPKQPAPQFRGDPTGPKESKKKVERETETHPVD) is disordered. The Nuclear localization signal, RNA-binding (TAR), and protein transduction motif lies at 49-57 (RKKRRQRRR). Positions 49–86 (RKKRRQRRRAPEDSQTHQVSLPKQPAPQFRGDPTGPKE) are interaction with the host capping enzyme RNGTT. N6-acetyllysine; by host EP300 and GCN5L2 is present on residues lysine 50 and lysine 51. 2 positions are modified to asymmetric dimethylarginine; by host PRMT6: arginine 52 and arginine 53. Lysine 71 participates in a covalent cross-link: Glycyl lysine isopeptide (Lys-Gly) (interchain with G-Cter in ubiquitin). Residues 78–80 (RGD) carry the Cell attachment site motif. A compositionally biased stretch (basic and acidic residues) spans 83–101 (GPKESKKKVERETETHPVD).

Belongs to the lentiviruses Tat family. Interacts with host CCNT1. Associates with the P-TEFb complex composed at least of Tat, P-TEFb (CDK9 and CCNT1), TAR RNA, RNA Pol II. Recruits the HATs CREBBP, TAF1/TFIID, EP300, PCAF and GCN5L2. Interacts with host KAT5/Tip60; this interaction targets the latter to degradation. Interacts with the host deacetylase SIRT1. Interacts with host capping enzyme RNGTT; this interaction stimulates RNGTT. Binds to host KDR, and to the host integrins ITGAV/ITGB3 and ITGA5/ITGB1. Interacts with host KPNB1/importin beta-1 without previous binding to KPNA1/importin alpha-1. Interacts with EIF2AK2. Interacts with host nucleosome assembly protein NAP1L1; this interaction may be required for the transport of Tat within the nucleus, since the two proteins interact at the nuclear rim. Interacts with host C1QBP/SF2P32; this interaction involves lysine-acetylated Tat. Interacts with the host chemokine receptors CCR2, CCR3 and CXCR4. Interacts with host DPP4/CD26; this interaction may trigger an anti-proliferative effect. Interacts with host LDLR. Interacts with the host extracellular matrix metalloproteinase MMP1. Interacts with host PRMT6; this interaction mediates Tat's methylation. Interacts with, and is ubiquitinated by MDM2/Hdm2. Interacts with host PSMC3 and HTATIP2. Interacts with STAB1; this interaction may overcome SATB1-mediated repression of IL2 and IL2RA (interleukin) in T cells by binding to the same domain than HDAC1. Interacts (when acetylated) with human CDK13, thereby increasing HIV-1 mRNA splicing and promoting the production of the doubly spliced HIV-1 protein Nef. Interacts with host TBP; this interaction modulates the activity of transcriptional pre-initiation complex. Interacts with host RELA. Interacts with host PLSCR1; this interaction negatively regulates Tat transactivation activity by altering its subcellular distribution. Asymmetrical arginine methylation by host PRMT6 seems to diminish the transactivation capacity of Tat and affects the interaction with host CCNT1. Post-translationally, acetylation by EP300, CREBBP, GCN5L2/GCN5 and PCAF regulates the transactivation activity of Tat. EP300-mediated acetylation of Lys-50 promotes dissociation of Tat from the TAR RNA through the competitive binding to PCAF's bromodomain. In addition, the non-acetylated Tat's N-terminus can also interact with PCAF. PCAF-mediated acetylation of Lys-28 enhances Tat's binding to CCNT1. Lys-50 is deacetylated by SIRT1. In terms of processing, polyubiquitination by host MDM2 does not target Tat to degradation, but activates its transactivation function and fosters interaction with CCNT1 and TAR RNA. Phosphorylated by EIF2AK2 on serine and threonine residues adjacent to the basic region important for TAR RNA binding and function. Phosphorylation of Tat by EIF2AK2 is dependent on the prior activation of EIF2AK2 by dsRNA.

Its subcellular location is the host nucleus. It is found in the host nucleolus. The protein localises to the host cytoplasm. The protein resides in the secreted. Functionally, transcriptional activator that increases RNA Pol II processivity, thereby increasing the level of full-length viral transcripts. Recognizes a hairpin structure at the 5'-LTR of the nascent viral mRNAs referred to as the transactivation responsive RNA element (TAR) and recruits the cyclin T1-CDK9 complex (P-TEFb complex) that will in turn hyperphosphorylate the RNA polymerase II to allow efficient elongation. The CDK9 component of P-TEFb and other Tat-activated kinases hyperphosphorylate the C-terminus of RNA Pol II that becomes stabilized and much more processive. Other factors such as HTATSF1/Tat-SF1, SUPT5H/SPT5, and HTATIP2 are also important for Tat's function. Besides its effect on RNA Pol II processivity, Tat induces chromatin remodeling of proviral genes by recruiting the histone acetyltransferases (HATs) CREBBP, EP300 and PCAF to the chromatin. This also contributes to the increase in proviral transcription rate, especially when the provirus integrates in transcriptionally silent region of the host genome. To ensure maximal activation of the LTR, Tat mediates nuclear translocation of NF-kappa-B by interacting with host RELA. Through its interaction with host TBP, Tat may also modulate transcription initiation. Tat can reactivate a latently infected cell by penetrating in it and transactivating its LTR promoter. In the cytoplasm, Tat is thought to act as a translational activator of HIV-1 mRNAs. Extracellular circulating Tat can be endocytosed by surrounding uninfected cells via the binding to several surface receptors such as CD26, CXCR4, heparan sulfate proteoglycans (HSPG) or LDLR. Neurons are rarely infected, but they internalize Tat via their LDLR. Through its interaction with nuclear HATs, Tat is potentially able to control the acetylation-dependent cellular gene expression. Modulates the expression of many cellular genes involved in cell survival, proliferation or in coding for cytokines or cytokine receptors. Tat plays a role in T-cell and neurons apoptosis. Tat induced neurotoxicity and apoptosis probably contribute to neuroAIDS. Circulating Tat also acts as a chemokine-like and/or growth factor-like molecule that binds to specific receptors on the surface of the cells, affecting many cellular pathways. In the vascular system, Tat binds to ITGAV/ITGB3 and ITGA5/ITGB1 integrins dimers at the surface of endothelial cells and competes with bFGF for heparin-binding sites, leading to an excess of soluble bFGF. This chain is Protein Tat, found in Human immunodeficiency virus type 1 group M subtype B (isolate MN) (HIV-1).